Consider the following 72-residue polypeptide: Translation initiation factor IF-1 (72 aa).

Residues 1–72 form the S1-like domain; sequence MAKEDSIEMQ…TKGRIVFRAR (72 aa).

Belongs to the IF-1 family. Component of the 30S ribosomal translation pre-initiation complex which assembles on the 30S ribosome in the order IF-2 and IF-3, IF-1 and N-formylmethionyl-tRNA(fMet); mRNA recruitment can occur at any time during PIC assembly.

It localises to the cytoplasm. In terms of biological role, one of the essential components for the initiation of protein synthesis. Stabilizes the binding of IF-2 and IF-3 on the 30S subunit to which N-formylmethionyl-tRNA(fMet) subsequently binds. Helps modulate mRNA selection, yielding the 30S pre-initiation complex (PIC). Upon addition of the 50S ribosomal subunit IF-1, IF-2 and IF-3 are released leaving the mature 70S translation initiation complex. This chain is Translation initiation factor IF-1, found in Idiomarina loihiensis (strain ATCC BAA-735 / DSM 15497 / L2-TR).